Here is a 297-residue protein sequence, read N- to C-terminus: Bifunctional protein FolD 1 (297 aa).

NADP(+) contacts are provided by residues 164–166 (GRS), S193, and I234.

It belongs to the tetrahydrofolate dehydrogenase/cyclohydrolase family. In terms of assembly, homodimer.

It carries out the reaction (6R)-5,10-methylene-5,6,7,8-tetrahydrofolate + NADP(+) = (6R)-5,10-methenyltetrahydrofolate + NADPH. The enzyme catalyses (6R)-5,10-methenyltetrahydrofolate + H2O = (6R)-10-formyltetrahydrofolate + H(+). The protein operates within one-carbon metabolism; tetrahydrofolate interconversion. In terms of biological role, catalyzes the oxidation of 5,10-methylenetetrahydrofolate to 5,10-methenyltetrahydrofolate and then the hydrolysis of 5,10-methenyltetrahydrofolate to 10-formyltetrahydrofolate. This is Bifunctional protein FolD 1 from Haloarcula marismortui (strain ATCC 43049 / DSM 3752 / JCM 8966 / VKM B-1809) (Halobacterium marismortui).